We begin with the raw amino-acid sequence, 439 residues long: ATP-dependent protease ATPase subunit HslU (439 aa).

ATP-binding positions include Ile-17, 59-64 (GVGKTE), Asp-251, Glu-317, and Arg-389.

It belongs to the ClpX chaperone family. HslU subfamily. As to quaternary structure, a double ring-shaped homohexamer of HslV is capped on each side by a ring-shaped HslU homohexamer. The assembly of the HslU/HslV complex is dependent on binding of ATP.

The protein resides in the cytoplasm. ATPase subunit of a proteasome-like degradation complex; this subunit has chaperone activity. The binding of ATP and its subsequent hydrolysis by HslU are essential for unfolding of protein substrates subsequently hydrolyzed by HslV. HslU recognizes the N-terminal part of its protein substrates and unfolds these before they are guided to HslV for hydrolysis. The polypeptide is ATP-dependent protease ATPase subunit HslU (Campylobacter jejuni (strain RM1221)).